The chain runs to 1376 residues: MSEVQGTIEFSIELHKFHNVDLFQRGYYHVRASLKASSRIPHRLVATLVGQTDDPGPYPPCVYDNVVYSRMFQILYRNEDIDINDVMAFKVHLLLDGERVEDALSEVDFQLKLDLHFTDSEQQLKDMSAVPLISSRTLGLYFHPTSGLHHHVPVMFDYFHLSVISVTVHGSLIALHQPLISFARPVKASWLGKSGQELVTDNTSISMENLVFGSAYCKPPSSEGSYVPSEDCIQHAYKWHKDLCQLLLSAYSALGLCHANVLKEIPDLPHSEIEELPTERTLSQLCNQLQLLSDPEEITEQISKDLAWLRSQLLITWSHFLETVTLQPDVTSYLMQEHHTLRVRRFSEAFFYTEHEKPAVLTFQENLIQSQSNLSTEIRNSEYLAALPPLPIECLDIDGDWNSIPIIFEDRYVECPRKDYITDNALAEPANEDECEFSEESPSENTHVGSKPHSIQSTTVHENASFEKPNVGTKAQEDCSTEGPEQGFDHNQEATSVESEFVADFTPLPIPPSETSDSGAKLSLSALNEDCDQVTRCYQEPKRTPGVTYIKVKPQSQDQYKGETVLIVSSQYGNSLSLANSEAPQSESETMNSNNGMRTYEHIALHEISSTKNELISTLKSQKSRQCSHILLKSSSTELIRNSTEDTLMVKSCPRDIYEKSSLFASGCIKRSSSVISDSGIESEPSSVAWCDVHNRRMDLNSDKDLLLQLSKQHWAYGNSLEGDHMESNTSLPSGIQASLASINSLPFEEEDREMELSKLTKSVSAPQISSPEETLNDLLNNKLVGEIIHSLKKCSSEEKEEESQTAMNYYNNITNDIISELANDTHNTNGTKSPESSLANVFIQGLIPNSESGVIDDYIFNDPVVPKADDFPSVHQETILCDLNSTDDQNILDHSNKMEHVAKACSFSADPLVDVNSITHTSFSVIAPAKEIFEDFPVLHEIELSEDSVESIDQSIDNYYHELYSIEKEVSNNRTDGASELEETSASLSTVRVLERRKGVELVNLSVSCTATCLPFSSMQKDTPVIPGFSTKQALFPITRQPLGSFEVNSSNSNTDEESNERMLSFHQAKDKFRKELKFEGFLYSDQPVLASDVPYFPPEEEQTEDGIHLVVCVHGLDGNSADLRLVKTFLELGLPGANLDFLMSEKNQTDTFADFDAMTDRLIDEIVQHIQLYNLSISRISFIGHSLGTIIIRSVLTRPRFRYYLNKLHTFLSLSGPHLGTLYSNSTLVNTGLWLMQKLKKSGSLLQLTFRDNADLRKCFLYQLSQKPGLQYFKNVVLVASPQDRYVPFHSARIEMCKNATKDRHTGPVYTEMINNLLQPVIDSKDCTLIRHNVSHALPNTANTLIGRAAHIAVLDSELFLEKFFLVAGLGYFK.

Residues 431 to 442 (NEDECEFSEESP) show a composition bias toward acidic residues. The disordered stretch occupies residues 431–489 (NEDECEFSEESPSENTHVGSKPHSIQSTTVHENASFEKPNVGTKAQEDCSTEGPEQGFD). Polar residues predominate over residues 443 to 462 (SENTHVGSKPHSIQSTTVHE).

This sequence belongs to the FAM135 family.

The protein is Protein FAM135B (fam135b) of Xenopus laevis (African clawed frog).